The primary structure comprises 347 residues: GMP reductase (347 aa).

An NADP(+)-binding site is contributed by 108-131 (DDFTKTRQILAMSSALRFICVDVA). 2 residues coordinate K(+): glycine 181 and glycine 183. Cysteine 186 serves as the catalytic Thioimidate intermediate. Residue 216–239 (IVGDGGCTCPGDVAKAFGGGADFV) coordinates NADP(+).

It belongs to the IMPDH/GMPR family. GuaC type 1 subfamily. Homotetramer.

It catalyses the reaction IMP + NH4(+) + NADP(+) = GMP + NADPH + 2 H(+). Catalyzes the irreversible NADPH-dependent deamination of GMP to IMP. It functions in the conversion of nucleobase, nucleoside and nucleotide derivatives of G to A nucleotides, and in maintaining the intracellular balance of A and G nucleotides. In Aeromonas hydrophila subsp. hydrophila (strain ATCC 7966 / DSM 30187 / BCRC 13018 / CCUG 14551 / JCM 1027 / KCTC 2358 / NCIMB 9240 / NCTC 8049), this protein is GMP reductase.